The sequence spans 321 residues: Small ribosomal subunit biogenesis GTPase RsgA (321 aa).

The CP-type G domain occupies 89–248 (QSWINRPPVA…VADTPGFNRP (160 aa)). GTP is bound by residues 138-141 (TKRD) and 190-198 (GPSGVGKTS). The Zn(2+) site is built by cysteine 273, cysteine 278, histidine 280, and cysteine 286.

This sequence belongs to the TRAFAC class YlqF/YawG GTPase family. RsgA subfamily. In terms of assembly, monomer. Associates with 30S ribosomal subunit, binds 16S rRNA. Zn(2+) serves as cofactor.

The protein localises to the cytoplasm. Functionally, one of several proteins that assist in the late maturation steps of the functional core of the 30S ribosomal subunit. Helps release RbfA from mature subunits. May play a role in the assembly of ribosomal proteins into the subunit. Circularly permuted GTPase that catalyzes slow GTP hydrolysis, GTPase activity is stimulated by the 30S ribosomal subunit. This is Small ribosomal subunit biogenesis GTPase RsgA from Prochlorococcus marinus (strain MIT 9303).